The chain runs to 206 residues: Outer-membrane lipoprotein LolB (206 aa).

A signal peptide spans 1–18 (MKTFKFLTALFATAILTA). Cysteine 19 is lipidated: N-palmitoyl cysteine. Cysteine 19 is lipidated: S-diacylglycerol cysteine.

This sequence belongs to the LolB family. Monomer.

The protein resides in the cell outer membrane. Plays a critical role in the incorporation of lipoproteins in the outer membrane after they are released by the LolA protein. This Haemophilus influenzae (strain PittEE) protein is Outer-membrane lipoprotein LolB.